The sequence spans 806 residues: Phenylalanine--tRNA ligase beta subunit (806 aa).

A tRNA-binding domain is found at 44-158 (ADGLSKLVVG…EEAVPGDAIF (115 aa)). Residues 411–486 (TEPVEVSTSL…RIYGYDKLPT (76 aa)) enclose the B5 domain. The Mg(2+) site is built by D464, D470, E473, and E474. Residues 713-806 (TKFPAMTRDV…LTEQVGAEVR (94 aa)) form the FDX-ACB domain.

This sequence belongs to the phenylalanyl-tRNA synthetase beta subunit family. Type 1 subfamily. In terms of assembly, tetramer of two alpha and two beta subunits. Mg(2+) is required as a cofactor.

The protein localises to the cytoplasm. It catalyses the reaction tRNA(Phe) + L-phenylalanine + ATP = L-phenylalanyl-tRNA(Phe) + AMP + diphosphate + H(+). This is Phenylalanine--tRNA ligase beta subunit from Streptococcus pyogenes serotype M28 (strain MGAS6180).